Reading from the N-terminus, the 176-residue chain is ATP-dependent protease subunit HslV (176 aa).

Threonine 6 is an active-site residue. Na(+) is bound by residues serine 161, cysteine 164, and threonine 167.

This sequence belongs to the peptidase T1B family. HslV subfamily. As to quaternary structure, a double ring-shaped homohexamer of HslV is capped on each side by a ring-shaped HslU homohexamer. The assembly of the HslU/HslV complex is dependent on binding of ATP.

It is found in the cytoplasm. It catalyses the reaction ATP-dependent cleavage of peptide bonds with broad specificity.. With respect to regulation, allosterically activated by HslU binding. In terms of biological role, protease subunit of a proteasome-like degradation complex believed to be a general protein degrading machinery. This Thermosipho melanesiensis (strain DSM 12029 / CIP 104789 / BI429) protein is ATP-dependent protease subunit HslV.